The following is a 148-amino-acid chain: Protein-arginine-phosphatase (148 aa).

Cysteine 9 acts as the Nucleophile in catalysis. 10-15 contributes to the substrate binding site; that stretch reads TGNTCR. Residue arginine 15 is part of the active site. Residue aspartate 117 is the Proton donor of the active site.

It belongs to the low molecular weight phosphotyrosine protein phosphatase family. Is present in solution as a mixture of monomers, dimers and higher order oligomers (trimers and tetramers).

It carries out the reaction N(omega)-phospho-L-arginyl-[protein] + H2O = L-arginyl-[protein] + phosphate. Its activity is regulated as follows. Irreversibly inhibited by the synthetic inhibitor cyc-SeCN-amidine, which inactivates the enzyme by inducing disulfide bond formation between the two active site cysteine residues Cys-9 and Cys-14. In terms of biological role, catalyzes the specific dephosphorylation of phosphoarginine residues in proteins. Probably counteracts the protein arginine kinase McsB in vivo. Exhibits almost no activity against pTyr peptides. Protein arginine phosphorylation has a physiologically important role and is involved in the regulation of many critical cellular processes, such as protein homeostasis, motility, competence, and stringent and stress responses, by regulating gene expression and protein activity. This is Protein-arginine-phosphatase (ywle) from Geobacillus stearothermophilus (Bacillus stearothermophilus).